We begin with the raw amino-acid sequence, 337 residues long: MAIELLYDADADLSIIQGRKVAVIGYGSQGHAHAQCLRDSGVEVVIGLREGSKSSEKAQEAGFEVKSNADAAAWADVIMLLAPDTSQAEIFSHDIEPNLKDGDALLFGHGLNIHFELIKPAVNITVGMVAPKGPGHLVRRQFVDGKGVPCLIAVAQDPKGEGKDLALSYAAAIGGARAGVIPTTFREETETDLFGEQVVLCGGLEHLMMKGFEVLAEAGYAPEMAYFEVLHEMKLIVDLIWEGGIENMNYSISETAELGGYVAGPRIITPEVKENMKAVLADIQSGKFVRDMVADVEAGQPELKRYREEIAAHPIEATGSKLRDLMSWVKNPLDETA.

Residues 3 to 183 form the KARI N-terminal Rossmann domain; that stretch reads IELLYDADAD…GGARAGVIPT (181 aa). Residues 26 to 29, Arg49, Ser52, Ser54, and 84 to 87 contribute to the NADP(+) site; these read YGSQ and DTSQ. Residue His109 is part of the active site. Gly135 contributes to the NADP(+) binding site. Residues 184–329 enclose the KARI C-terminal knotted domain; that stretch reads TFREETETDL…SKLRDLMSWV (146 aa). Mg(2+) contacts are provided by Asp192, Glu196, Glu228, and Glu232. Residue Ser253 participates in substrate binding.

The protein belongs to the ketol-acid reductoisomerase family. It depends on Mg(2+) as a cofactor.

The enzyme catalyses (2R)-2,3-dihydroxy-3-methylbutanoate + NADP(+) = (2S)-2-acetolactate + NADPH + H(+). It carries out the reaction (2R,3R)-2,3-dihydroxy-3-methylpentanoate + NADP(+) = (S)-2-ethyl-2-hydroxy-3-oxobutanoate + NADPH + H(+). It participates in amino-acid biosynthesis; L-isoleucine biosynthesis; L-isoleucine from 2-oxobutanoate: step 2/4. It functions in the pathway amino-acid biosynthesis; L-valine biosynthesis; L-valine from pyruvate: step 2/4. Involved in the biosynthesis of branched-chain amino acids (BCAA). Catalyzes an alkyl-migration followed by a ketol-acid reduction of (S)-2-acetolactate (S2AL) to yield (R)-2,3-dihydroxy-isovalerate. In the isomerase reaction, S2AL is rearranged via a Mg-dependent methyl migration to produce 3-hydroxy-3-methyl-2-ketobutyrate (HMKB). In the reductase reaction, this 2-ketoacid undergoes a metal-dependent reduction by NADPH to yield (R)-2,3-dihydroxy-isovalerate. The protein is Ketol-acid reductoisomerase (NADP(+)) of Corynebacterium diphtheriae (strain ATCC 700971 / NCTC 13129 / Biotype gravis).